Consider the following 197-residue polypeptide: FMN-dependent NADH:quinone oxidoreductase (197 aa).

Ser10 contacts FMN.

It belongs to the azoreductase type 1 family. As to quaternary structure, homodimer. The cofactor is FMN.

The enzyme catalyses 2 a quinone + NADH + H(+) = 2 a 1,4-benzosemiquinone + NAD(+). It catalyses the reaction N,N-dimethyl-1,4-phenylenediamine + anthranilate + 2 NAD(+) = 2-(4-dimethylaminophenyl)diazenylbenzoate + 2 NADH + 2 H(+). Its function is as follows. Quinone reductase that provides resistance to thiol-specific stress caused by electrophilic quinones. In terms of biological role, also exhibits azoreductase activity. Catalyzes the reductive cleavage of the azo bond in aromatic azo compounds to the corresponding amines. In Mycoplasma genitalium (strain ATCC 33530 / DSM 19775 / NCTC 10195 / G37) (Mycoplasmoides genitalium), this protein is FMN-dependent NADH:quinone oxidoreductase.